Consider the following 120-residue polypeptide: Large ribosomal subunit protein uL18 (120 aa).

It belongs to the universal ribosomal protein uL18 family. In terms of assembly, part of the 50S ribosomal subunit; part of the 5S rRNA/L5/L18/L25 subcomplex. Contacts the 5S and 23S rRNAs.

Its function is as follows. This is one of the proteins that bind and probably mediate the attachment of the 5S RNA into the large ribosomal subunit, where it forms part of the central protuberance. The protein is Large ribosomal subunit protein uL18 of Bartonella henselae (strain ATCC 49882 / DSM 28221 / CCUG 30454 / Houston 1) (Rochalimaea henselae).